A 424-amino-acid chain; its full sequence is MTAIVDIVGREILDSRGNPTVEVDVVLEDGSIGRAAVPSGASTGAHEAVELRDGGPRYLGKGVARAVEAVNGEIFEAIGGLEAEDQIHIDRTMIELDGTPNKSRLGANAILGVSLAVAKATAAASGLPLYRYVGGASAHILPVPMMNILNGGAHADNPIDFQEFMIMPVGAPTLRDAVRWGSEIFHTLKSGLKAAGHNTNVGDEGGFAPNLKDANAALDFIMASIEKAGFKPGDEVAIALDCAATEFFKDGKYVYEGEGQTRDAQAQAEYLSKLAGEYPIISIEDGMAEDDFEGWKALTDLAGSKVQLVGDDLFVTNAARLKDGINMGIANSILVKVNQIGSLTETLEAVETAHKAAYTAVMSHRSGETEDSTIADLAVATNCGQIKTGSLARSDRLAKYNQLIRIEEQLGRAARYAGRTVVRG.

Glutamine 162 is a binding site for (2R)-2-phosphoglycerate. The active-site Proton donor is the glutamate 204. Mg(2+)-binding residues include aspartate 241, glutamate 284, and aspartate 311. (2R)-2-phosphoglycerate is bound by residues lysine 336, arginine 365, serine 366, and lysine 387. Lysine 336 (proton acceptor) is an active-site residue.

Belongs to the enolase family. Mg(2+) is required as a cofactor.

Its subcellular location is the cytoplasm. It localises to the secreted. It is found in the cell surface. It catalyses the reaction (2R)-2-phosphoglycerate = phosphoenolpyruvate + H2O. It participates in carbohydrate degradation; glycolysis; pyruvate from D-glyceraldehyde 3-phosphate: step 4/5. Functionally, catalyzes the reversible conversion of 2-phosphoglycerate (2-PG) into phosphoenolpyruvate (PEP). It is essential for the degradation of carbohydrates via glycolysis. The protein is Enolase of Chelativorans sp. (strain BNC1).